The sequence spans 306 residues: Glutaminase (306 aa).

Residues Ser-61, Asn-111, Glu-157, Asn-164, Tyr-188, Tyr-240, and Val-258 each coordinate substrate.

This sequence belongs to the glutaminase family. As to quaternary structure, homotetramer.

The catalysed reaction is L-glutamine + H2O = L-glutamate + NH4(+). The polypeptide is Glutaminase (Psychrobacter cryohalolentis (strain ATCC BAA-1226 / DSM 17306 / VKM B-2378 / K5)).